Here is a 687-residue protein sequence, read N- to C-terminus: RNA-binding protein VTS1 (687 aa).

The span at 1-10 (MASHTLRPHR) shows a compositional bias: basic residues. 3 disordered regions span residues 1–115 (MASH…TPEA), 248–341 (AAAK…PGIG), and 526–598 (SPFN…AGVA). Over residues 29-41 (TRQSLGPPTSGNS) the composition is skewed to polar residues. Residues 52-68 (GLASPSSPSQPRHVSSS) are compositionally biased toward low complexity. Polar residues predominate over residues 287–301 (GLESNMSGRSRSKSP). Basic and acidic residues predominate over residues 305-324 (PRPKSTDFSGKPRESLRRES). Residues 526-539 (SPFNASAPSLQPGL) show a composition bias toward polar residues. The segment covering 550 to 566 (QSSHLNQHYNQHQQQHQ) has biased composition (low complexity). The segment covering 585 to 597 (QTGGGGAGGGAGV) has biased composition (gly residues). An SAM domain is found at 606-667 (KVLEDVPNWL…LKVFYNVRTK (62 aa)).

This sequence belongs to the VTS1 family. As to quaternary structure, monomer. Binds to RNA.

The protein resides in the cytoplasm. Its subcellular location is the cytosol. It localises to the P-body. Its function is as follows. RNA-binding protein involved in post-transcriptional regulation through transcript degradation. The polypeptide is RNA-binding protein VTS1 (Cryptococcus neoformans var. grubii serotype A (strain H99 / ATCC 208821 / CBS 10515 / FGSC 9487) (Filobasidiella neoformans var. grubii)).